The following is a 348-amino-acid chain: Tripartite motif-containing protein 16-like protein (348 aa).

Residues 139–337 form the B30.2/SPRY domain; that stretch reads YWTSKPEPST…RIVDLGEEPE (199 aa).

Belongs to the TRIM/RBCC family.

The protein localises to the cytoplasm. This is Tripartite motif-containing protein 16-like protein (TRIM16L) from Homo sapiens (Human).